The chain runs to 386 residues: uncharacterized protein (386 aa).

A run of 12 helical transmembrane segments spans residues 8–28, 43–63, 79–99, 102–122, 134–154, 156–176, 216–236, 241–261, 272–292, 297–317, 342–362, and 365–385; these read VFVIWITTFTTMLGVGFIAPI, IGLIFGSFALARTVAQIPVGV, FFYGVSTLMYNFVSTVLGFLI, IFTGIFSAFVTPVAGSYIAAI, IFNSAITLGFGIGPFIGGILA, MYGIKMPFYFCGFLGILAAII, FIINVSNVMINAGIYAYLALY, NITISQVGFMIALTNILMALL, LGNIMIIIGIFIISFGMYLLS, FLTILASLTIIAVGSSISSTA, INIGMFIGAVSFGFLADILGI, and MYKFSAIFSIVVGIISYLRIE.

Belongs to the major facilitator superfamily.

The protein localises to the cell membrane. This is an uncharacterized protein from Methanocaldococcus jannaschii (strain ATCC 43067 / DSM 2661 / JAL-1 / JCM 10045 / NBRC 100440) (Methanococcus jannaschii).